The primary structure comprises 309 residues: Vacuolar membrane protein YOR292C (309 aa).

Topologically, residues Met-1–Arg-52 are vacuolar. Asn-19 is a glycosylation site (N-linked (GlcNAc...) asparagine). A helical membrane pass occupies residues Ile-53 to Ser-73. Residues His-74–Asn-81 are Cytoplasmic-facing. A helical membrane pass occupies residues Ser-82 to Ala-102. At Gln-103 to Trp-183 the chain is on the vacuolar side. N-linked (GlcNAc...) asparagine glycosylation is present at Asn-121. Residues Gly-184–Leu-204 traverse the membrane as a helical segment. Residues Asn-205 to Gln-225 are Cytoplasmic-facing. Residues Leu-226–Gly-246 traverse the membrane as a helical segment. Topologically, residues Gly-247–Tyr-260 are vacuolar. A helical membrane pass occupies residues Ile-261–Ile-281. The Cytoplasmic portion of the chain corresponds to Met-282–Lys-309.

It belongs to the peroxisomal membrane protein PXMP2/4 family. N-glycosylated.

The protein localises to the vacuole membrane. The protein is Vacuolar membrane protein YOR292C of Saccharomyces cerevisiae (strain ATCC 204508 / S288c) (Baker's yeast).